Reading from the N-terminus, the 252-residue chain is ATP synthase subunit a (252 aa).

Helical transmembrane passes span 29–49 (FTNV…FLFI), 87–107 (FFPL…IGLF), 116–136 (QIMI…GYGF), 146–166 (LFVP…IEVI), 183–205 (MLAG…ELGI), and 219–239 (VAIT…FTVL).

It belongs to the ATPase A chain family. F-type ATPases have 2 components, CF(1) - the catalytic core - and CF(0) - the membrane proton channel. CF(1) has five subunits: alpha(3), beta(3), gamma(1), delta(1), epsilon(1). CF(0) has three main subunits: a(1), b(2) and c(9-12). The alpha and beta chains form an alternating ring which encloses part of the gamma chain. CF(1) is attached to CF(0) by a central stalk formed by the gamma and epsilon chains, while a peripheral stalk is formed by the delta and b chains.

Its subcellular location is the cell inner membrane. Its function is as follows. Key component of the proton channel; it plays a direct role in the translocation of protons across the membrane. This is ATP synthase subunit a from Bartonella quintana (strain Toulouse) (Rochalimaea quintana).